The primary structure comprises 249 residues: Imidazole glycerol phosphate synthase subunit HisF (249 aa).

Catalysis depends on residues aspartate 11 and aspartate 130.

Belongs to the HisA/HisF family. In terms of assembly, heterodimer of HisH and HisF.

The protein resides in the cytoplasm. It catalyses the reaction 5-[(5-phospho-1-deoxy-D-ribulos-1-ylimino)methylamino]-1-(5-phospho-beta-D-ribosyl)imidazole-4-carboxamide + L-glutamine = D-erythro-1-(imidazol-4-yl)glycerol 3-phosphate + 5-amino-1-(5-phospho-beta-D-ribosyl)imidazole-4-carboxamide + L-glutamate + H(+). It participates in amino-acid biosynthesis; L-histidine biosynthesis; L-histidine from 5-phospho-alpha-D-ribose 1-diphosphate: step 5/9. In terms of biological role, IGPS catalyzes the conversion of PRFAR and glutamine to IGP, AICAR and glutamate. The HisF subunit catalyzes the cyclization activity that produces IGP and AICAR from PRFAR using the ammonia provided by the HisH subunit. The protein is Imidazole glycerol phosphate synthase subunit HisF of Exiguobacterium sibiricum (strain DSM 17290 / CCUG 55495 / CIP 109462 / JCM 13490 / 255-15).